The following is a 309-amino-acid chain: MPDLDRIVKDIAEEMRARPDRGAVASYIPELARADPQAFGLVVIDGDGRVAAGGDADIAFSIQSISKVFTLTLALGMVGDRLWRRVGREPSGSPFNSIVQLERENGIPRNPFINAGAIAVTDVILSGHQPREALGEILRFMQFLAQDDSIAIDDRVAASEKRTGFRNAALANYMRSFDVIENPVDYTLGVYFHHCAIAMTCRQLATAGLFLAYSGHHPLAGHSVISAERARRINAIMLTCGHYDGSGDFAYRVGLPGKSGVGGGILAVAPGRASICVWSPGLDAAGNSHLGRIALEMLVKRTGWSIFGV.

Positions 64, 114, 160, 167, 191, 243, and 261 each coordinate substrate.

The protein belongs to the glutaminase family. As to quaternary structure, homotetramer.

The catalysed reaction is L-glutamine + H2O = L-glutamate + NH4(+). The sequence is that of Glutaminase from Methylorubrum populi (strain ATCC BAA-705 / NCIMB 13946 / BJ001) (Methylobacterium populi).